A 397-amino-acid polypeptide reads, in one-letter code: Succinyl-diaminopimelate desuccinylase (397 aa).

His-73 is a Zn(2+) binding site. Residue Asp-75 is part of the active site. Residue Asp-106 coordinates Zn(2+). The active-site Proton acceptor is Glu-140. Zn(2+)-binding residues include Glu-141, Glu-169, and His-366.

Belongs to the peptidase M20A family. DapE subfamily. In terms of assembly, homodimer. Zn(2+) is required as a cofactor. It depends on Co(2+) as a cofactor.

It carries out the reaction N-succinyl-(2S,6S)-2,6-diaminopimelate + H2O = (2S,6S)-2,6-diaminopimelate + succinate. Its pathway is amino-acid biosynthesis; L-lysine biosynthesis via DAP pathway; LL-2,6-diaminopimelate from (S)-tetrahydrodipicolinate (succinylase route): step 3/3. Functionally, catalyzes the hydrolysis of N-succinyl-L,L-diaminopimelic acid (SDAP), forming succinate and LL-2,6-diaminopimelate (DAP), an intermediate involved in the bacterial biosynthesis of lysine and meso-diaminopimelic acid, an essential component of bacterial cell walls. The sequence is that of Succinyl-diaminopimelate desuccinylase from Rhizobium meliloti (strain 1021) (Ensifer meliloti).